Consider the following 86-residue polypeptide: Small ribosomal subunit protein bS20 (86 aa).

Positions M1–K25 are disordered.

This sequence belongs to the bacterial ribosomal protein bS20 family.

Its function is as follows. Binds directly to 16S ribosomal RNA. This Exiguobacterium sp. (strain ATCC BAA-1283 / AT1b) protein is Small ribosomal subunit protein bS20.